The chain runs to 719 residues: DNA ligase (719 aa).

NAD(+) is bound by residues 42–46, 92–93, and E126; these read DAAYD and SL. K128 (N6-AMP-lysine intermediate) is an active-site residue. R149, E185, K301, and K325 together coordinate NAD(+). C430, C433, C448, and C454 together coordinate Zn(2+). In terms of domain architecture, BRCT spans 640–719; the sequence is ATGSPVEGKT…DDWFKLVGED (80 aa).

The protein belongs to the NAD-dependent DNA ligase family. LigA subfamily. Mg(2+) serves as cofactor. Requires Mn(2+) as cofactor.

The catalysed reaction is NAD(+) + (deoxyribonucleotide)n-3'-hydroxyl + 5'-phospho-(deoxyribonucleotide)m = (deoxyribonucleotide)n+m + AMP + beta-nicotinamide D-nucleotide.. DNA ligase that catalyzes the formation of phosphodiester linkages between 5'-phosphoryl and 3'-hydroxyl groups in double-stranded DNA using NAD as a coenzyme and as the energy source for the reaction. It is essential for DNA replication and repair of damaged DNA. The chain is DNA ligase from Brucella melitensis biotype 1 (strain ATCC 23456 / CCUG 17765 / NCTC 10094 / 16M).